Reading from the N-terminus, the 380-residue chain is Cytochrome b (380 aa).

A run of 4 helical transmembrane segments spans residues 34–54 (FGSL…LLAM), 78–99 (WLIR…YMHI), 114–134 (WNTG…GYVL), and 179–199 (FFAL…IHLT). Heme b-binding residues include His84 and His98. Positions 183 and 197 each coordinate heme b. An a ubiquinone-binding site is contributed by His202. Helical transmembrane passes span 227–247 (LKDI…ALFS), 289–309 (LGGV…PLLH), 321–341 (LSQL…WIGS), and 348–368 (FIII…ILFP).

This sequence belongs to the cytochrome b family. In terms of assembly, the cytochrome bc1 complex contains 11 subunits: 3 respiratory subunits (MT-CYB, CYC1 and UQCRFS1), 2 core proteins (UQCRC1 and UQCRC2) and 6 low-molecular weight proteins (UQCRH/QCR6, UQCRB/QCR7, UQCRQ/QCR8, UQCR10/QCR9, UQCR11/QCR10 and a cleavage product of UQCRFS1). This cytochrome bc1 complex then forms a dimer. It depends on heme b as a cofactor.

The protein resides in the mitochondrion inner membrane. In terms of biological role, component of the ubiquinol-cytochrome c reductase complex (complex III or cytochrome b-c1 complex) that is part of the mitochondrial respiratory chain. The b-c1 complex mediates electron transfer from ubiquinol to cytochrome c. Contributes to the generation of a proton gradient across the mitochondrial membrane that is then used for ATP synthesis. This is Cytochrome b (MT-CYB) from Oceanodroma furcata (Fork-tailed storm-petrel).